Consider the following 381-residue polypeptide: tRNA-specific 2-thiouridylase MnmA (381 aa).

ATP is bound by residues 9 to 16 (GMSGGVDS) and methionine 35. Residues 95-97 (NPD) form an interaction with target base in tRNA region. Cysteine 100 (nucleophile) is an active-site residue. The cysteines at positions 100 and 196 are disulfide-linked. Glycine 124 contributes to the ATP binding site. Residues 146 to 148 (KDQ) are interaction with tRNA. The active-site Cysteine persulfide intermediate is cysteine 196. Residues 308-309 (RY) are interaction with tRNA.

Belongs to the MnmA/TRMU family.

Its subcellular location is the cytoplasm. The enzyme catalyses S-sulfanyl-L-cysteinyl-[protein] + uridine(34) in tRNA + AH2 + ATP = 2-thiouridine(34) in tRNA + L-cysteinyl-[protein] + A + AMP + diphosphate + H(+). Catalyzes the 2-thiolation of uridine at the wobble position (U34) of tRNA, leading to the formation of s(2)U34. The sequence is that of tRNA-specific 2-thiouridylase MnmA from Paraburkholderia xenovorans (strain LB400).